The chain runs to 835 residues: Replication origin-binding protein (835 aa).

The region spanning 54–215 is the Helicase ATP-binding domain; that stretch reads PGMSQTRPVT…SGLRGDENIH (162 aa). Position 67–74 (67–74) interacts with ATP; it reads APMGSGKT.

The protein belongs to the herpesviridae OriBP family. In terms of assembly, homodimer. Interacts with the major DNA-binding protein. Interacts with the helicase/primase component 52 and the polymerase accessory protein.

The protein localises to the host nucleus. In terms of biological role, functions as a docking protein to recruit essential components of the viral replication machinery to viral DNA origins. In the presence of the major DNA-binding protein, opens dsDNA leading to a conformational change in the origin that facilitates DNA unwinding and subsequent replication. This Varicella-zoster virus (strain Oka vaccine) (HHV-3) protein is Replication origin-binding protein.